Here is a 157-residue protein sequence, read N- to C-terminus: Phosphopantetheine adenylyltransferase (157 aa).

Ser-9 contributes to the substrate binding site. Residues 9–10 (SF) and His-17 each bind ATP. 3 residues coordinate substrate: Lys-41, Val-73, and Lys-87. Residues 88–90 (GLR), Glu-98, and 122–128 (YSFVSSS) each bind ATP.

Belongs to the bacterial CoaD family. As to quaternary structure, homohexamer. Mg(2+) serves as cofactor.

The protein resides in the cytoplasm. It carries out the reaction (R)-4'-phosphopantetheine + ATP + H(+) = 3'-dephospho-CoA + diphosphate. It participates in cofactor biosynthesis; coenzyme A biosynthesis; CoA from (R)-pantothenate: step 4/5. Reversibly transfers an adenylyl group from ATP to 4'-phosphopantetheine, yielding dephospho-CoA (dPCoA) and pyrophosphate. The polypeptide is Phosphopantetheine adenylyltransferase (Mycobacterium marinum (strain ATCC BAA-535 / M)).